The chain runs to 241 residues: tRNA pseudouridine synthase A (241 aa).

D51 serves as the catalytic Nucleophile. Y110 provides a ligand contact to substrate.

It belongs to the tRNA pseudouridine synthase TruA family. As to quaternary structure, homodimer.

The catalysed reaction is uridine(38/39/40) in tRNA = pseudouridine(38/39/40) in tRNA. In terms of biological role, formation of pseudouridine at positions 38, 39 and 40 in the anticodon stem and loop of transfer RNAs. The sequence is that of tRNA pseudouridine synthase A from Campylobacter jejuni subsp. jejuni serotype O:2 (strain ATCC 700819 / NCTC 11168).